Reading from the N-terminus, the 1072-residue chain is Carbamoyl phosphate synthase large chain (1072 aa).

Positions 1-401 are carboxyphosphate synthetic domain; sequence MPKRLDINTI…SLLKAVRSLE (401 aa). 12 residues coordinate ATP: R129, R169, G175, G176, K208, I210, E215, G241, V242, H243, Q284, and E298. Residues 133–327 enclose the ATP-grasp 1 domain; it reads RTLMQELNEP…IAKLAAKIAV (195 aa). Mg(2+) is bound by residues Q284, E298, and N300. The Mn(2+) site is built by Q284, E298, and N300. The segment at 402–546 is oligomerization domain; the sequence is LGIYHLELDH…YSTYADENES (145 aa). Residues 547–929 form a carbamoyl phosphate synthetic domain region; it reads IVTDRKSVVV…ALYKGLVASG (383 aa). Residues 671–861 enclose the ATP-grasp 2 domain; it reads EAALTKLGIP…MANVATKVIL (191 aa). Positions 707, 746, 752, 777, 778, 779, 780, 820, and 832 each coordinate ATP. Positions 820, 832, and 834 each coordinate Mg(2+). Residues Q820, E832, and N834 each coordinate Mn(2+). The 143-residue stretch at 930-1072 folds into the MGS-like domain; the sequence is INIPTHGSVI…QTKRHEVVHA (143 aa). Positions 930-1072 are allosteric domain; sequence INIPTHGSVI…QTKRHEVVHA (143 aa).

The protein belongs to the CarB family. Composed of two chains; the small (or glutamine) chain promotes the hydrolysis of glutamine to ammonia, which is used by the large (or ammonia) chain to synthesize carbamoyl phosphate. Tetramer of heterodimers (alpha,beta)4. Requires Mg(2+) as cofactor. It depends on Mn(2+) as a cofactor.

The catalysed reaction is hydrogencarbonate + L-glutamine + 2 ATP + H2O = carbamoyl phosphate + L-glutamate + 2 ADP + phosphate + 2 H(+). It carries out the reaction hydrogencarbonate + NH4(+) + 2 ATP = carbamoyl phosphate + 2 ADP + phosphate + 2 H(+). The protein operates within amino-acid biosynthesis; L-arginine biosynthesis; carbamoyl phosphate from bicarbonate: step 1/1. Its pathway is pyrimidine metabolism; UMP biosynthesis via de novo pathway; (S)-dihydroorotate from bicarbonate: step 1/3. Its function is as follows. Large subunit of the glutamine-dependent carbamoyl phosphate synthetase (CPSase). CPSase catalyzes the formation of carbamoyl phosphate from the ammonia moiety of glutamine, carbonate, and phosphate donated by ATP, constituting the first step of 2 biosynthetic pathways, one leading to arginine and/or urea and the other to pyrimidine nucleotides. The large subunit (synthetase) binds the substrates ammonia (free or transferred from glutamine from the small subunit), hydrogencarbonate and ATP and carries out an ATP-coupled ligase reaction, activating hydrogencarbonate by forming carboxy phosphate which reacts with ammonia to form carbamoyl phosphate. The sequence is that of Carbamoyl phosphate synthase large chain from Bacillus cereus (strain AH820).